The primary structure comprises 304 residues: Probable intron-encoded endonuclease 1 (304 aa).

Residues 84-175 (DKGGIYSFIN…RFNFDNLYNF (92 aa)) form the GIY-YIG domain.

To endonucleases of group I introns of fungi and phage.

The protein localises to the mitochondrion. In terms of biological role, mitochondrial DNA endonuclease involved in intron homing. In Neurospora crassa (strain ATCC 24698 / 74-OR23-1A / CBS 708.71 / DSM 1257 / FGSC 987), this protein is Probable intron-encoded endonuclease 1.